The chain runs to 663 residues: MAQGTLIRVTPEQPTHAVCVLGTLTQLDICSSAPEDCTSFSINASPGVVVDIAHGPPAKKKSTGSSTWPLDPGVEVTLTMKVASGSTGDQKVQISYYGPKTPPVKALLYLTGVEISLCADITRTGKVKPTRAVKDQRTWTWGPCGQGAILLVNCDRDNLESSAMDCEDDEVLDSEDLQDMSLMTLSTKTPKDFFTNHTLVLHVARSEMDKVRVFQATRGKLSSKCSVVLGPKWPSHYLMVPGGKHNMDFYVEALAFPDTDFPGLITLTISLLDTSNLELPEAVVFQDSVVFRVAPWIMTPNTQPPQEVYACSIFENEDFLKSVTTLAMKAKCKLTICPEEENMDDQWMQDEMEIGYIQAPHKTLPVVFDSPRNRGLKEFPIKRVMGPDFGYVTRGPQTGGISGLDSFGNLEVSPPVTVRGKEYPLGRILFGDSCYPSNDSRQMHQALQDFLSAQQVQAPVKLYSDWLSVGHVDEFLSFVPAPDRKGFRLLLASPRSCYKLFQEQQNEGHGEALLFEGIKKKKQQKIKNILSNKTLREHNSFVERCIDWNRELLKRELGLAESDIIDIPQLFKLKEFSKAEAFFPNMVNMLVLGKHLGIPKPFGPVINGRCCLEEKVCSLLEPLGLQCTFINDFFTYHIRHGEVHCGTNVRRKPFSFKWWNMVP.

Ca(2+) is bound by residues Asn153, Asp155, Asp157, Asp165, Asp168, Glu170, Asp176, and Asp179. Arg205, Arg212, and Arg218 each carry citrulline. Gln349 is a binding site for Ca(2+). Asp350 is a catalytic residue. Residues Glu351, Glu353, Asp369, and Ser370 each contribute to the Ca(2+) site. Citrulline is present on Arg372. Asn373 serves as a coordination point for Ca(2+). A citrulline mark is found at Arg374 and Arg383. Residue Arg374 participates in substrate binding. 4 residues coordinate Ca(2+): Asp388, Phe407, Leu410, and Glu411. Catalysis depends on residues His471 and Asp473. A substrate-binding site is contributed by Arg639. Cys645 is a catalytic residue.

It belongs to the protein arginine deiminase family. Ca(2+) serves as cofactor. In terms of processing, autocitrullination at Arg-372 and Arg-374 inactivates the enzyme. As to expression, expressed in eosinophils and neutrophils, not expressed in peripheral monocytes or lymphocytes.

Its subcellular location is the cytoplasm. It localises to the nucleus. The protein localises to the cytoplasmic granule. It carries out the reaction L-arginyl-[protein] + H2O = L-citrullyl-[protein] + NH4(+). Strongly Inhibited by F-amidine and N-alpha-benzoyl-N5-(2-chloro-1-iminoethyl)-L-ornithine amide (Cl-amidine). These inhibitors are however not specific to PADI4 and also inhibit other members of the family. Incorporation of a carboxylate ortho to the backbone amide of Cl-amidine results in inhibitors with increased specificity for PADI4: N-alpha-(2-carboxyl)benzoyl-N(5)-(2-fluoro-1-iminoethyl)-L-ornithine amide (o-F-amidine) and N-alpha-(2-carboxyl)benzoyl-N(5)-(2-chloro-1-iminoethyl)-L-ornithine amide (o-Cl-amidine). Strongly and specifically inhibited by Thr-Asp-F-amidine (TDFA); other members of the family are not inhibited. Functionally, catalyzes the citrullination/deimination of arginine residues of proteins such as histones, thereby playing a key role in histone code and regulation of stem cell maintenance. Citrullinates histone H1 at 'Arg-54' (to form H1R54ci), histone H3 at 'Arg-2', 'Arg-8', 'Arg-17' and/or 'Arg-26' (to form H3R2ci, H3R8ci, H3R17ci, H3R26ci, respectively) and histone H4 at 'Arg-3' (to form H4R3ci). Acts as a key regulator of stem cell maintenance by mediating citrullination of histone H1: citrullination of 'Arg-54' of histone H1 (H1R54ci) results in H1 displacement from chromatin and global chromatin decondensation, thereby promoting pluripotency and stem cell maintenance. Promotes profound chromatin decondensation during the innate immune response to infection in neutrophils by mediating formation of H1R54ci. Required for the formation of neutrophil extracellular traps (NETs); NETs are mainly composed of DNA fibers and are released by neutrophils to bind pathogens during inflammation. Citrullination of histone H3 prevents their methylation by CARM1 and HRMT1L2/PRMT1 and represses transcription. Citrullinates EP300/P300 at 'Arg-2142', which favors its interaction with NCOA2/GRIP1. The protein is Protein-arginine deiminase type-4 (PADI4) of Homo sapiens (Human).